The sequence spans 273 residues: Putative expansin-B2 (273 aa).

A signal peptide spans 1–29 (MTILVVDRYYMLMNLLFALTCLLLNLTHC). N-linked (GlcNAc...) asparagine glycosylation occurs at asparagine 36. An Expansin-like EG45 domain is found at 65-173 (GGACGYGNAV…KKVECNYIGK (109 aa)). 3 cysteine pairs are disulfide-bonded: cysteine 68/cysteine 97, cysteine 100/cysteine 168, and cysteine 105/cysteine 111. The Expansin-like CBD domain maps to 186–269 (NSFAVLVAYV…NWQPGAIYKS (84 aa)).

Belongs to the expansin family. Expansin B subfamily.

The protein localises to the secreted. It localises to the cell wall. It is found in the membrane. Functionally, may cause loosening and extension of plant cell walls by disrupting non-covalent bonding between cellulose microfibrils and matrix glucans. No enzymatic activity has been found. The sequence is that of Putative expansin-B2 (EXPB2) from Arabidopsis thaliana (Mouse-ear cress).